We begin with the raw amino-acid sequence, 144 residues long: Putative lipoprotein MAH_0816 (144 aa).

A signal peptide spans M1–A24. A lipid anchor (N-palmitoyl cysteine) is attached at C25. A lipid anchor (S-diacylglycerol cysteine) is attached at C25.

Belongs to the mycobacterial 19 kDa antigen family.

The protein localises to the cell membrane. The protein is Putative lipoprotein MAH_0816 of Mycobacterium avium subsp. hominissuis (strain TH135).